The following is a 178-amino-acid chain: Small ribosomal subunit protein uS5 (178 aa).

The 64-residue stretch at 15 to 78 folds into the S5 DRBM domain; the sequence is FEEKIIEIRR…ADAKKNVIEV (64 aa).

Belongs to the universal ribosomal protein uS5 family. Part of the 30S ribosomal subunit. Contacts proteins S4 and S8.

Its function is as follows. With S4 and S12 plays an important role in translational accuracy. Located at the back of the 30S subunit body where it stabilizes the conformation of the head with respect to the body. The polypeptide is Small ribosomal subunit protein uS5 (Thermotoga neapolitana (strain ATCC 49049 / DSM 4359 / NBRC 107923 / NS-E)).